The chain runs to 337 residues: Monoacylglycerol lipase abhd6-B (337 aa).

Residues 1 to 19 (MDIDVLNMFLVAGGTLLVP) are Extracellular-facing. Residues 20–42 (LLAFMTSFLLWPAALIRIYYWYW) form a helical; Signal-anchor for type II membrane protein membrane-spanning segment. At 43–337 (RRALGMQVKY…QSTDNHKKHD (295 aa)) the chain is on the cytoplasmic side. The region spanning 72–313 (PSVLMLHGFS…CGHSVVMERP (242 aa)) is the AB hydrolase-1 domain. Residue Ser-148 is the Nucleophile of the active site. Catalysis depends on charge relay system residues Asp-278 and His-306.

It belongs to the AB hydrolase superfamily.

The protein resides in the late endosome membrane. It localises to the lysosome membrane. The protein localises to the mitochondrion membrane. The enzyme catalyses Hydrolyzes glycerol monoesters of long-chain fatty acids.. It catalyses the reaction 1-octanoylglycerol + H2O = octanoate + glycerol + H(+). The catalysed reaction is 1-decanoylglycerol + H2O = decanoate + glycerol + H(+). It carries out the reaction 1-dodecanoylglycerol + H2O = dodecanoate + glycerol + H(+). The enzyme catalyses 1-tetradecanoylglycerol + H2O = tetradecanoate + glycerol + H(+). It catalyses the reaction 2-hexadecanoylglycerol + H2O = glycerol + hexadecanoate + H(+). The catalysed reaction is 2-(9Z-octadecenoyl)-glycerol + H2O = glycerol + (9Z)-octadecenoate + H(+). It carries out the reaction 1-(9Z-octadecenoyl)-glycerol + H2O = glycerol + (9Z)-octadecenoate + H(+). The enzyme catalyses 2-(9Z,12Z-octadecadienoyl)-glycerol + H2O = (9Z,12Z)-octadecadienoate + glycerol + H(+). It catalyses the reaction 2-(5Z,8Z,11Z,14Z-eicosatetraenoyl)-glycerol + H2O = glycerol + (5Z,8Z,11Z,14Z)-eicosatetraenoate + H(+). The catalysed reaction is 1-(5Z,8Z,11Z,14Z-eicosatetraenoyl)-glycerol + H2O = glycerol + (5Z,8Z,11Z,14Z)-eicosatetraenoate + H(+). It carries out the reaction 1-(9Z,12Z-octadecadienoyl)-glycerol + H2O = (9Z,12Z)-octadecadienoate + glycerol + H(+). The enzyme catalyses 3-(9Z-octadecenoyl)-sn-glycero-1-phospho-(3'-(9Z-octadecenoyl)-1'-sn-glycerol) + H2O = 3-(9Z-octadecenoyl)-sn-glycero-1-phospho-(1'-sn-glycerol) + (9Z)-octadecenoate + H(+). It catalyses the reaction (S,S)-2-(9Z-octadecenoyl)-sn-glycero-1-phospho-(2'-(9Z-octadecenoyl)-1'-sn-glycerol) + H2O = (S,S)-2-(9Z-octadecenoyl)-sn-glycero-1-phospho-(1'-sn-glycerol) + (9Z)-octadecenoate + H(+). The catalysed reaction is (R,R)-2-(9Z-octadecenoyl)-sn-glycero-3-phospho-(2'-(9Z-octadecenoyl)-3'-sn-glycerol) + H2O = (R,R)-2-(9Z-octadecenoyl)-sn-glycero-3-phospho-(3'-sn-glycerol) + (9Z)-octadecenoate + H(+). Its function is as follows. Lipase that preferentially hydrolysis medium-chain saturated monoacylglycerols including 2-arachidonoylglycerol. Through 2-arachidonoylglycerol degradation may regulate endocannabinoid signaling pathways. Also has a lysophosphatidyl lipase activity with a preference for lysophosphatidylglycerol among other lysophospholipids. Also able to degrade bis(monoacylglycero)phosphate (BMP) and constitutes the major enzyme for BMP catabolism. BMP, also known as lysobisphosphatidic acid, is enriched in late endosomes and lysosomes and plays a key role in the formation of intraluminal vesicles and in lipid sorting. The protein is Monoacylglycerol lipase abhd6-B (abhd6-b) of Xenopus laevis (African clawed frog).